Here is a 631-residue protein sequence, read N- to C-terminus: MFKKAFQILQQLGRALMTPVAVLPAAGLLLRFGDKDLLNIPIIKDAGGVVFDNLPLIFAVGVAIGLAGGEGVAGLAAVIGYLILTVTLDNMGKLLGLQPPYEGAEHLIDMGVFGGIIIGLLAAYLYKRFSSIELHPVLGFFSGKRFVPIITSVSSLVIGVIFSFVWPLIQNGINAASSLIADSTVGLFFYATIYRLLIPFGLHHIFYTPFYFMMGEYTDPSTGNTVTGDLTRFFAGDPTAGRFMMGDFPYMIFCLPAVALAIIHTARPEKKKMISGVMISAALTSMLTGITEPVEFSFLFVAPVLYLINSILAGVIFVVCDLFHVRHGYTFSGGGIDYVLNYGLSTNGWVVIPVGIVFAFIYYYLFRFAILKWNLKTPGRETDEDGQNEEKAPVAKDQLAFHVLQALGGQQNIANLDACITRLRVTVHQPSQVCKDELKRLGAVGVLEVNNNFQAIFGTKSDALKDDIKTIMAGGVPATAAALDTVTDKPLKPDSDETFIYPIKGETVSLGDVPDQVFSEKMMGEGFAIIPSEGKVVAPADGEIVSIFPTKHAIGFMSAGGTEILIHVGIDTVKLNGEGFEAHVTSGQAVKQGELLLTFDLNYIKQHAASAITPVIFTNTSEEDLKHIQMK.

The PTS EIIC type-1 domain maps to 3-382 (KKAFQILQQL…WNLKTPGRET (380 aa)). Transmembrane regions (helical) follow at residues 12–32 (LGRA…LLRF), 56–76 (LIFA…AGLA), 106–126 (HLID…AYLY), 149–169 (IITS…WPLI), 196–216 (LLIP…MMGE), 243–263 (FMMG…LAII), 298–318 (FLFV…VIFV), and 350–370 (VVIP…RFAI). The PTS EIIB type-1 domain occupies 397–478 (DQLAFHVLQA…KTIMAGGVPA (82 aa)). The active-site Phosphocysteine intermediate; for EIIB activity is Cys419. Cys419 is subject to Phosphocysteine. The PTS EIIA type-1 domain occupies 515–619 (DQVFSEKMMG…SAITPVIFTN (105 aa)). His567 (tele-phosphohistidine intermediate; for EIIA activity) is an active-site residue. His567 is subject to Phosphohistidine.

It localises to the cell membrane. It carries out the reaction D-glucosamine(out) + N(pros)-phospho-L-histidyl-[protein] = D-glucosamine 6-phosphate(in) + L-histidyl-[protein]. The phosphoenolpyruvate-dependent sugar phosphotransferase system (sugar PTS), a major carbohydrate active transport system, catalyzes the phosphorylation of incoming sugar substrates concomitantly with their translocation across the cell membrane. This system is involved in glucosamine transport. In vitro, when expressed in the absence of GamR and NagP, can transport N-acetylglucosamine. Its function is as follows. In addition, plays an important role in the phosphorylation of EIIA-deficient PTS transporters. The EIIA domain can transfer a phosphoryl group to EIIA-deficient PTS transporters, enabling growth with maltose, N-acetylglucosamine, sucrose or trehalose as the sole carbon source. The protein is PTS system glucosamine-specific EIICBA component of Bacillus subtilis (strain 168).